We begin with the raw amino-acid sequence, 132 residues long: Chemokine-like protein TAFA-5 (132 aa).

Positions 1-43 are cleaved as a signal peptide; the sequence is MAPSPRTGSRQDATALPSMSSTFWAFMILASLLIAYCSQLAAG. Asn113 carries an N-linked (GlcNAc...) asparagine glycan.

It belongs to the TAFA family. In terms of tissue distribution, expressed in the subcutaneous and perirenal adipose tissue (at protein level). Highly expressed in adipose tissue with moderate expression in the brain and ovary. Isoform 2: Brain-specific.

It localises to the secreted. Its function is as follows. Acts as a chemokine-like protein by regulating cell proliferation and migration through activation of G protein-coupled receptors (GPCRs), such as S1PR2 and FPR2. Stimulates chemotactic migration of macrophages mediated by the MAPK3/ERK1 and AKT1 pathway. Blocks TNFSF11/RANKL-induced osteoclast formation from macrophages by inhibiting up-regulation of osteoclast fusogenic and differentiation genes. Stimulation of macrophage migration and inhibition of osteoclast formation is mediated via GPCR FPR2. Acts as an adipokine by negatively regulating vascular smooth muscle cell (VSMC) proliferation and migration in response to platelet-derived growth factor stimulation via GPCR S1PR2 and G protein GNA12/GNA13-transmitted RHOA signaling. Inhibits injury-induced cell proliferation and neointima formation in the femoral arteries. This chain is Chemokine-like protein TAFA-5, found in Homo sapiens (Human).